The following is a 4004-amino-acid chain: Hybrid PKS-NRPS synthetase mpsA (4004 aa).

The 434-residue stretch at 5 to 438 (NEPIAVIGSA…GANAHAILES (434 aa)) folds into the Ketosynthase family 3 (KS3) domain. Residues Cys178, His317, and His358 each act as for beta-ketoacyl synthase activity in the active site. A Malonyl-CoA:ACP transacylase (MAT) domain is found at 544–867 (VFTGQGAQWP…RGGDDVNAFS (324 aa)). An N-terminal hotdog fold region spans residues 933–1066 (HPILGVKSIE…GTISITLGIP (134 aa)). Positions 933-1233 (HPILGVKSIE…SMVPFSNATA (301 aa)) are dehydratase (DH) domain. The 302-residue stretch at 933–1234 (HPILGVKSIE…MVPFSNATAE (302 aa)) folds into the PKS/mFAS DH domain. His966 serves as the catalytic Proton acceptor; for dehydratase activity. A C-terminal hotdog fold region spans residues 1081 to 1234 (MVDVEVDRFY…MVPFSNATAE (154 aa)). Residue Asp1141 is the Proton donor; for dehydratase activity of the active site. Residues 1289-1575 (EEEEQTLIHY…DTYAPNFDSL (287 aa)) form a methyltransferase (MT) domain region. One can recognise a Ketoreductase (KR) domain in the interval 2102–2272 (TYFMVGLSGE…RRGLAASILG (171 aa)). In terms of domain architecture, Carrier 1 spans 2384–2462 (EVVEIMQAGF…DLLNDALDRL (79 aa)). Ser2422 carries the post-translational modification O-(pantetheine 4'-phosphoryl)serine. The disordered stretch occupies residues 2471 to 2540 (GADPSSVSRP…ERRAAELARK (70 aa)). Low complexity predominate over residues 2488-2500 (PSVSRPASNAPPV). Residues 2514–2540 (LKAEREREAEAKRKREEERRAAELARK) show a composition bias toward basic and acidic residues. Positions 2584–3019 (PMSFGQSRFW…RQCAERPGRE (436 aa)) are condensation (C) domain. Residues 3060 to 3459 (KRHTASLAIK…GRIEGDTQIK (400 aa)) form an adenylation (A) (KR) domain region. Residues 3570–3647 (ANLTPTESRL…GMARAIDDAT (78 aa)) enclose the Carrier 2 domain. Ser3607 is subject to O-(pantetheine 4'-phosphoryl)serine. The interval 3694 to 3924 (LTIVLTGATG…VVEGVAQALF (231 aa)) is reductase (RED) domain.

This sequence in the C-terminal section; belongs to the NRP synthetase family. The cofactor is pantetheine 4'-phosphate.

It participates in secondary metabolite biosynthesis. Functionally, hybrid PKS-NRPS synthetase; part of the gene cluster that mediates the biosynthesis of macrophasetins, 3-decalinoyltetramic acids (DTAs) which feature a tetramate (pyrrolidine-2,4-dione) unit connected to a decalin fragment and that have potent bioactivities. The PKS-NRPS mpsA together with its associated enoylreductase partner mpsG incorporate one unit of acetyl-CoA, seven units of malonyl-CoA, and one unit of L-alanine to assemble the linear tetramic acid intermediate corresponding to the backbone of macrophasetins. Without the Diels-Alderase mpsD, the mpsA/G product can undergo the non-enzymatic intramolecular Diels-Alder (IMDA) reaction to generate both macrophasetin A and macrophasetin B. Catalyzed by mpsD, the linear tetramic acid intermediate is thoroughly converted to macrophasetin A via the endo-IMDA reaction in a regioselective and stereoselective manner. Finally, the cytochrome P450 monooxygenase mpsF catalyzes the hydroxylation at C20 to yield the end product macrophasetin C. This is Hybrid PKS-NRPS synthetase mpsA from Macrophomina phaseolina (strain MS6) (Charcoal rot fungus).